The chain runs to 298 residues: UDP-N-acetylenolpyruvoylglucosamine reductase (298 aa).

The 166-residue stretch at 26–191 (KTGGAADVFV…LDATFSLALE (166 aa)) folds into the FAD-binding PCMH-type domain. Arg-170 is an active-site residue. The active-site Proton donor is Ser-220. The active site involves Glu-290.

The protein belongs to the MurB family. Requires FAD as cofactor.

It localises to the cytoplasm. The catalysed reaction is UDP-N-acetyl-alpha-D-muramate + NADP(+) = UDP-N-acetyl-3-O-(1-carboxyvinyl)-alpha-D-glucosamine + NADPH + H(+). Its pathway is cell wall biogenesis; peptidoglycan biosynthesis. Functionally, cell wall formation. The sequence is that of UDP-N-acetylenolpyruvoylglucosamine reductase from Listeria monocytogenes serovar 1/2a (strain ATCC BAA-679 / EGD-e).